The chain runs to 229 residues: Heptaprenylglyceryl phosphate synthase (229 aa).

A sn-glycerol 1-phosphate-binding site is contributed by lysine 12. Residues aspartate 14 and serine 40 each coordinate Mg(2+). Sn-glycerol 1-phosphate is bound by residues 159–164 (YLEYSG), glycine 189, and 209–210 (GN).

It belongs to the GGGP/HepGP synthase family. Group I subfamily. Homodimer. Requires Mg(2+) as cofactor.

The catalysed reaction is sn-glycerol 1-phosphate + all-trans-heptaprenyl diphosphate = 3-heptaprenyl-sn-glycero-1-phosphate + diphosphate. It participates in membrane lipid metabolism; glycerophospholipid metabolism. Prenyltransferase that catalyzes in vivo the transfer of the heptaprenyl moiety of heptaprenyl pyrophosphate (HepPP; 35 carbon atoms) to the C3 hydroxyl of sn-glycerol-1-phosphate (G1P), producing heptaprenylglyceryl phosphate (HepGP). This reaction is an ether-bond-formation step in the biosynthesis of archaea-type G1P-based membrane lipids found in Bacillales. The sequence is that of Heptaprenylglyceryl phosphate synthase from Bacillus cereus (strain AH187).